The following is a 173-amino-acid chain: 16S rRNA aminocarboxypropyltransferase (173 aa).

4 residues coordinate S-adenosyl-L-methionine: T25, L72, L96, and S115.

It belongs to the TDD superfamily. TSR3 family.

The protein localises to the cytoplasm. It carries out the reaction an N(1)-methylpseudouridine in rRNA + S-adenosyl-L-methionine = N(1)-methyl-N(3)-[(3S)-3-amino-3-carboxypropyl]pseudouridine in rRNA + S-methyl-5'-thioadenosine + H(+). Aminocarboxypropyltransferase that catalyzes the aminocarboxypropyl transfer on pseudouridine corresponding to position 914 in M.jannaschii 16S rRNA. It constitutes the last step in biosynthesis of the hypermodified N1-methyl-N3-(3-amino-3-carboxypropyl) pseudouridine (m1acp3-Psi). The protein is 16S rRNA aminocarboxypropyltransferase of Methanosarcina mazei (strain ATCC BAA-159 / DSM 3647 / Goe1 / Go1 / JCM 11833 / OCM 88) (Methanosarcina frisia).